The sequence spans 276 residues: 2-dehydro-3-deoxyphosphooctonate aldolase (276 aa).

It belongs to the KdsA family.

It localises to the cytoplasm. The catalysed reaction is D-arabinose 5-phosphate + phosphoenolpyruvate + H2O = 3-deoxy-alpha-D-manno-2-octulosonate-8-phosphate + phosphate. It functions in the pathway carbohydrate biosynthesis; 3-deoxy-D-manno-octulosonate biosynthesis; 3-deoxy-D-manno-octulosonate from D-ribulose 5-phosphate: step 2/3. Its pathway is bacterial outer membrane biogenesis; lipopolysaccharide biosynthesis. The polypeptide is 2-dehydro-3-deoxyphosphooctonate aldolase (Xanthomonas oryzae pv. oryzae (strain MAFF 311018)).